The chain runs to 353 residues: Cyanuric acid amidohydrolase (353 aa).

Positions 1 to 90 are RU A; the sequence is MSSTALYTVP…NIFVRDERQY (90 aa). Residues arginine 49 and 69–70 contribute to the substrate site; that span reads SG. The interval 96–231 is RU B; sequence GLVTAVGRTR…CHILVVAESD (136 aa). Residue lysine 145 is part of the active site. Substrate contacts are provided by residues arginine 177 and 214-215; that span reads SS. Serine 214 (nucleophile) is an active-site residue. Residues 237-353 are RU C; that stretch reads LRAAHTAMRD…TANATGEASR (117 aa). Mg(2+) is bound at residue glutamate 275. Substrate is bound by residues arginine 302 and 321–322; that span reads SG. The Mg(2+) site is built by alanine 324, glutamine 327, glycine 328, proline 329, and glycine 332.

Belongs to the cyclic amide hydrolase (CyAH) family. In terms of assembly, homotetramer.

The catalysed reaction is cyanurate + H2O = 1-carboxybiuret + H(+). Its pathway is xenobiotic degradation; atrazine degradation; biuret from cyanurate: step 1/1. Inhibited by barbituric acid. Its function is as follows. Responsible for the hydrolysis of cyanuric acid, an intermediate formed during catabolism of s-triazine based compounds in herbicides such as atrazine and polymers such as melamine. Catalyzes the hydrolytic opening of the s-triazine ring of cyanuric acid (2,4,6-trihydroxy-s-triazine) to yield carbon dioxide and carboxybiuret, which spontaneously decarboxylates to biuret. Required for growth on melamine or cyanuric acid as sole nitrogen source. The sequence is that of Cyanuric acid amidohydrolase from Rhodococcus sp.